Reading from the N-terminus, the 547-residue chain is Chaperonin GroEL (547 aa).

Residues 30–33 (TLGP), lysine 51, 87–91 (DGTTT), glycine 415, 479–481 (NAA), and aspartate 495 contribute to the ATP site.

It belongs to the chaperonin (HSP60) family. In terms of assembly, forms a cylinder of 14 subunits composed of two heptameric rings stacked back-to-back. Interacts with the co-chaperonin GroES.

It localises to the cytoplasm. It carries out the reaction ATP + H2O + a folded polypeptide = ADP + phosphate + an unfolded polypeptide.. Functionally, together with its co-chaperonin GroES, plays an essential role in assisting protein folding. The GroEL-GroES system forms a nano-cage that allows encapsulation of the non-native substrate proteins and provides a physical environment optimized to promote and accelerate protein folding. This Enterobacter sp. (strain 638) protein is Chaperonin GroEL.